The primary structure comprises 760 residues: Catecholate siderophore receptor Fiu (760 aa).

A signal peptide spans 1–31; it reads MENNRNFPARQFHSLTFFAGLCIGITPVAQA. Residues 67–175 enclose the TBDR plug domain; the sequence is PVADTTRTMT…PTGSINMISK (109 aa). The 581-residue stretch at 180–760 folds into the TBDR beta-barrel domain; sequence DSGIDASASI…TFLLTANMHF (581 aa). The TonB C-terminal box signature appears at 743–760; the sequence is RYHPGEPRTFLLTANMHF.

It belongs to the TonB-dependent receptor family.

The protein localises to the cell outer membrane. Involved in the active transport across the outer membrane of iron complexed with catecholate siderophores such as dihydroxybenzoylserine and dihydroxybenzoate. It derives its energy for transport by interacting with the trans-periplasmic membrane protein TonB. Can also transport catechol-substituted cephalosporins. Receptor for microcins M, H47 and E492. This chain is Catecholate siderophore receptor Fiu (fiu), found in Escherichia coli O6:H1 (strain CFT073 / ATCC 700928 / UPEC).